The chain runs to 307 residues: MDAIDYKKIFSEIVNELSSEDEKGSVATYIPELANVDPNKLGMHLTTVTNQHFAYGDAEEAFSIQSIAKVWSLTLALKHLGADTWQRVGVEPSGTAFNSLVQLEYEMGIPRNPFINAGAIVVCDILVSCLKNPKEDLLDFIRTSSGIPSIEYCPVIAESEVKTGHRNYALAHMMKGFGNIHNDVDCVLDLYFSLCSIKLTCKQLAQAFLFLAAGGVNPATQQQVITPKRTKRINSIMQMCGFYDEAGEFAFKVGLPGKSGVGGGIVAVHPGKYCIAVFSPRLNASGNSVKAMKVLEALTTKTELSIF.

Residues Ser66, Asn116, Glu160, Asn167, Tyr191, Tyr243, and Val261 each coordinate substrate.

It belongs to the glutaminase family. In terms of assembly, homotetramer.

It catalyses the reaction L-glutamine + H2O = L-glutamate + NH4(+). The chain is Glutaminase from Saccharophagus degradans (strain 2-40 / ATCC 43961 / DSM 17024).